The primary structure comprises 156 residues: ATP synthase subunit b (156 aa).

Residues 7 to 29 (LFGQTVAFILFVWFCMKFVWPPL) traverse the membrane as a helical segment.

Belongs to the ATPase B chain family. F-type ATPases have 2 components, F(1) - the catalytic core - and F(0) - the membrane proton channel. F(1) has five subunits: alpha(3), beta(3), gamma(1), delta(1), epsilon(1). F(0) has three main subunits: a(1), b(2) and c(10-14). The alpha and beta chains form an alternating ring which encloses part of the gamma chain. F(1) is attached to F(0) by a central stalk formed by the gamma and epsilon chains, while a peripheral stalk is formed by the delta and b chains.

The protein localises to the cell inner membrane. Its function is as follows. F(1)F(0) ATP synthase produces ATP from ADP in the presence of a proton or sodium gradient. F-type ATPases consist of two structural domains, F(1) containing the extramembraneous catalytic core and F(0) containing the membrane proton channel, linked together by a central stalk and a peripheral stalk. During catalysis, ATP synthesis in the catalytic domain of F(1) is coupled via a rotary mechanism of the central stalk subunits to proton translocation. In terms of biological role, component of the F(0) channel, it forms part of the peripheral stalk, linking F(1) to F(0). The sequence is that of ATP synthase subunit b from Shewanella frigidimarina (strain NCIMB 400).